A 255-amino-acid chain; its full sequence is MSDYIVVKCGGSMLDQLHDVFFDCIKKLQQKYKVVIVHGGGPEIDAKLKDCNINVEKKDGLRVTPKEVMDIVQMVLCGSTNKKLVMNLQKHNLRAVGCSGCDGKLLQVQPVSEEIGYVGEVRYVETALLKGLINMNYIPVIAPVGINDNEIYNINADTAAAGIAAALSAKELIFITDVDGVLHEGKLLKKTDEFEIVNLIEKGVITGGMIPKVQAALASLKMGVQKVSIVNGTKDFTEVTGECIGTTVTRGVSIA.

Residues 40 to 41 (GG), Arg-62, and Asn-153 each bind substrate.

This sequence belongs to the acetylglutamate kinase family. ArgB subfamily.

Its subcellular location is the cytoplasm. The enzyme catalyses N-acetyl-L-glutamate + ATP = N-acetyl-L-glutamyl 5-phosphate + ADP. It functions in the pathway amino-acid biosynthesis; L-arginine biosynthesis; N(2)-acetyl-L-ornithine from L-glutamate: step 2/4. Functionally, catalyzes the ATP-dependent phosphorylation of N-acetyl-L-glutamate. In Bacillus cereus (strain ATCC 10987 / NRS 248), this protein is Acetylglutamate kinase.